The following is a 475-amino-acid chain: tRNA-2-methylthio-N(6)-dimethylallyladenosine synthase (475 aa).

Basic and acidic residues predominate over residues 1 to 10; sequence MQETTVKRDG. The segment at 1-22 is disordered; that stretch reads MQETTVKRDGASPSDAGTPATT. An MTTase N-terminal domain is found at 27–144; sequence GKLYIRTFGC…LPDLIKRRRA (118 aa). Residues C36, C73, C107, C181, C185, and C188 each contribute to the [4Fe-4S] cluster site. Residues 167–400 form the Radical SAM core domain; sequence RVDGATAFVS…QALINQQAAA (234 aa). A TRAM domain is found at 403–466; sequence QGMIGTRQRV…TNSLRGRVAG (64 aa).

It belongs to the methylthiotransferase family. MiaB subfamily. As to quaternary structure, monomer. [4Fe-4S] cluster is required as a cofactor.

Its subcellular location is the cytoplasm. The catalysed reaction is N(6)-dimethylallyladenosine(37) in tRNA + (sulfur carrier)-SH + AH2 + 2 S-adenosyl-L-methionine = 2-methylsulfanyl-N(6)-dimethylallyladenosine(37) in tRNA + (sulfur carrier)-H + 5'-deoxyadenosine + L-methionine + A + S-adenosyl-L-homocysteine + 2 H(+). Its function is as follows. Catalyzes the methylthiolation of N6-(dimethylallyl)adenosine (i(6)A), leading to the formation of 2-methylthio-N6-(dimethylallyl)adenosine (ms(2)i(6)A) at position 37 in tRNAs that read codons beginning with uridine. The polypeptide is tRNA-2-methylthio-N(6)-dimethylallyladenosine synthase (Bordetella bronchiseptica (strain ATCC BAA-588 / NCTC 13252 / RB50) (Alcaligenes bronchisepticus)).